Here is a 42-residue protein sequence, read N- to C-terminus: Pollen allergen Sal k 1 (42 aa).

The chain is Pollen allergen Sal k 1 from Kali turgidum (Prickly saltwort).